The primary structure comprises 280 residues: Probable endonuclease 4 (280 aa).

Zn(2+) contacts are provided by H69, H109, E145, D179, H182, H216, D229, H231, and E261.

Belongs to the AP endonuclease 2 family. The cofactor is Zn(2+).

It carries out the reaction Endonucleolytic cleavage to 5'-phosphooligonucleotide end-products.. In terms of biological role, endonuclease IV plays a role in DNA repair. It cleaves phosphodiester bonds at apurinic or apyrimidinic (AP) sites, generating a 3'-hydroxyl group and a 5'-terminal sugar phosphate. The sequence is that of Probable endonuclease 4 from Actinobacillus pleuropneumoniae serotype 5b (strain L20).